We begin with the raw amino-acid sequence, 113 residues long: Iron-sulfur cluster insertion protein ErpA (113 aa).

Residues C41, C105, and C107 each coordinate iron-sulfur cluster.

It belongs to the HesB/IscA family. As to quaternary structure, homodimer. The cofactor is iron-sulfur cluster.

Functionally, required for insertion of 4Fe-4S clusters for at least IspG. The polypeptide is Iron-sulfur cluster insertion protein ErpA (Histophilus somni (strain 2336) (Haemophilus somnus)).